The primary structure comprises 442 residues: HTH-type transcriptional regulator NorG (442 aa).

The 45-residue stretch at 2 to 46 (KIPPQRQLAIQYNVNRVTIIKSIELLEAEGFIYTKVGSGTYVNDY) folds into the HTH gntR-type domain. Residues 6-25 (QRQLAIQYNVNRVTIIKSIE) constitute a DNA-binding region (H-T-H motif). At K288 the chain carries N6-(pyridoxal phosphate)lysine.

The protein in the C-terminal section; belongs to the class-I pyridoxal-phosphate-dependent aminotransferase family. Pyridoxal 5'-phosphate serves as cofactor.

In terms of biological role, positively regulates the expression of the NorB efflux pump and negatively regulates the expression of the AbcA efflux pump. Binds specifically to the promoters of norA, norB and norC and abcA genes. Could also have an aminotransferase activity. This Staphylococcus aureus (strain Mu50 / ATCC 700699) protein is HTH-type transcriptional regulator NorG (norG).